Reading from the N-terminus, the 173-residue chain is Mesencephalic astrocyte-derived neurotrophic factor homolog (173 aa).

The N-terminal stretch at 1-22 (MKTAHLVVVVCFLAGALQTAVA) is a signal peptide. Intrachain disulfides connect Cys28–Cys114, Cys31–Cys103, Cys61–Cys72, and Cys148–Cys151.

The protein belongs to the ARMET family.

The protein resides in the secreted. Functionally, required during the maturation of the embryonic nervous system for maintenance of neuronal and cuticular connectivity. Essential for maintenance of dopaminergic neurons and dopamine levels. The chain is Mesencephalic astrocyte-derived neurotrophic factor homolog from Drosophila ananassae (Fruit fly).